Consider the following 483-residue polypeptide: Regulatory protein ViaA (483 aa).

The protein belongs to the ViaA family. Homodimer. Interacts with RavA.

Its subcellular location is the cytoplasm. In terms of biological role, component of the RavA-ViaA chaperone complex, which may act on the membrane to optimize the function of some of the respiratory chains. ViaA stimulates the ATPase activity of RavA. This Escherichia coli O127:H6 (strain E2348/69 / EPEC) protein is Regulatory protein ViaA.